The following is a 305-amino-acid chain: MQKYDIKTFQGMILALQDYWAQNGCTIVQPLDMEVGAGTSHPMTCLRALGPEPMSTAYVQPSRRPTDGRYGENPNRLQHYYQFQVALKPSPDNIQELYLGSLEVLGIDPLVHDIRFVEDNWENPTLGAWGLGWEVWLNGMEVTQFTYFQQVGGLECKPVTGEITYGIERLAMYIQEVDSVYDLTWNIAPDGSKVTYGDIFHQNEVEQSTYNFEHADVDFLFSFFDQCEKESKELLELEKPLPLPAYERILKAAHAFNLLDARKAISVTERQRYILRIRNLTKAVAEAYYASREALGFPMCKKEQA.

This sequence belongs to the class-II aminoacyl-tRNA synthetase family. Tetramer of two alpha and two beta subunits.

Its subcellular location is the cytoplasm. The catalysed reaction is tRNA(Gly) + glycine + ATP = glycyl-tRNA(Gly) + AMP + diphosphate. In Vibrio parahaemolyticus serotype O3:K6 (strain RIMD 2210633), this protein is Glycine--tRNA ligase alpha subunit.